We begin with the raw amino-acid sequence, 960 residues long: Leucine-rich repeat receptor-like serine/threonine-protein kinase SKM1 (960 aa).

The N-terminal stretch at 1 to 29 (MSTSHHHHHPPYLITTLFFLFLNFSCLHA) is a signal peptide. Residues 30 to 634 (NELELLLSFK…VRKRSTKSWW (605 aa)) lie on the Extracellular side of the membrane. Cys-61 and Cys-68 are oxidised to a cystine. Asn-70, Asn-83, Asn-103, Asn-108, Asn-129, and Asn-134 each carry an N-linked (GlcNAc...) asparagine glycan. LRR repeat units lie at residues 71-96 (ISRV…TFRL), 97-120 (PFLQ…IFTT), 122-146 (SPSL…FLPN), 149-168 (TLDL…IGVF), 169-194 (SNLR…NLSR), 196-216 (EFLT…LGKM), 217-240 (KNLK…IGGL), 241-264 (SSLN…LGDL), 265-288 (KKLE…IFSL), 290-312 (NLIS…VAQM), 313-336 (QSLE…VTSL), 338-360 (RLKV…LGKH), 361-384 (NNLT…LCDS), 386-408 (HLTK…LGMC), 409-432 (QSLE…FTKL), 434-454 (LVNF…TWDM), 455-477 (PQLE…FSRS), 478-501 (KRLK…LMTF), 503-525 (EIMD…LSSC), 526-549 (KNLV…FAEF), 550-573 (QVLS…LGNI), and 575-598 (SLVQ…AFLA). Asn-191 is a glycosylation site (N-linked (GlcNAc...) asparagine). The short motif at 221-226 (WIYLGY) is the CLE45 peptide binding element. Residues Asn-228 and Asn-252 are each glycosylated (N-linked (GlcNAc...) asparagine). The N-linked (GlcNAc...) asparagine glycan is linked to Asn-324. N-linked (GlcNAc...) asparagine glycans are attached at residues Asn-362 and Asn-372. Asn-537 is a glycosylation site (N-linked (GlcNAc...) asparagine). N-linked (GlcNAc...) asparagine glycosylation is found at Asn-580 and Asn-600. A helical transmembrane segment spans residues 635 to 655 (LIITSTFAAFLAVLVSGFFIV). Residues 656 to 960 (LVFQRTHNVL…TYLSKILSLA (305 aa)) are Cytoplasmic-facing. In terms of domain architecture, Protein kinase spans 691–953 (FTVNTILSSL…SSSSSCTTYL (263 aa)). A Phosphothreonine modification is found at Thr-692. ATP contacts are provided by residues 697–705 (LSSLKDQNV) and Lys-717. Tyr-834 carries the phosphotyrosine modification.

This sequence belongs to the protein kinase superfamily. Ser/Thr protein kinase family. As to quaternary structure, self-interacts. Binds to CLE45 present in the pistil, particularly under relatively high temperature (at 30 degrees Celsius). Expressed in pollen grains and roots vascular tissues. Present in roots.

The protein localises to the cell membrane. The catalysed reaction is L-seryl-[protein] + ATP = O-phospho-L-seryl-[protein] + ADP + H(+). It carries out the reaction L-threonyl-[protein] + ATP = O-phospho-L-threonyl-[protein] + ADP + H(+). Its function is as follows. Receptor with a serine/threonine-protein kinase activity. Together with SKM2, LRR-rich receptor-like kinase (LRR-RLK) required for male fertility by the perception of CLE43 and CLE45 peptides and the transduction of their promoting action in pollen tubes, especially under relatively high temperature (at 30 degrees Celsius), thus conferring tolerance against high temperature probably through the maintenance of mitochondrial activity. Seems to not be involved in the perception of CLE45 peptide in roots. In Arabidopsis thaliana (Mouse-ear cress), this protein is Leucine-rich repeat receptor-like serine/threonine-protein kinase SKM1.